We begin with the raw amino-acid sequence, 234 residues long: Ribonuclease HII (234 aa).

The 192-residue stretch at 16–207 folds into the RNase H type-2 domain; sequence ALVAGVDEAG…VRRMLTPKAI (192 aa). 3 residues coordinate a divalent metal cation: Asp22, Glu23, and Asp115.

The protein belongs to the RNase HII family. It depends on Mn(2+) as a cofactor. The cofactor is Mg(2+).

Its subcellular location is the cytoplasm. The catalysed reaction is Endonucleolytic cleavage to 5'-phosphomonoester.. Functionally, endonuclease that specifically degrades the RNA of RNA-DNA hybrids. This chain is Ribonuclease HII, found in Xylella fastidiosa (strain M12).